A 190-amino-acid chain; its full sequence is DNA dC-&gt;dU-editing enzyme APOBEC-3C (190 aa).

Residues 29–138 (DRNETWLCFT…PCYQEGLRSL (110 aa)) enclose the CMP/dCMP-type deaminase domain. The tract at residues 40 to 86 (EGIKRRSVVSWKTGVFRNQVDSETHCHAERCFLSWFCDDILSPNTKY) is (Microbial infection) Required for interaction with human foamy virus protein Bet. Zn(2+) is bound at residue His66. Glu68 acts as the Proton donor in catalysis. Residues Cys97 and Cys100 each contribute to the Zn(2+) site.

The protein belongs to the cytidine and deoxycytidylate deaminase family. In terms of assembly, homodimer. Interacts with TRIB3. Interacts with AGO2. As to quaternary structure, (Microbial infection) Interacts with human foamy virus protein Bet; this interaction does not induce APOBEC3C degradation but prevents its dimerization and incorporation into the virion by binding of Bet close to or within the APOBEC3C dimerization site. (Microbial infection) Interacts with HIV-1 Vif. Zn(2+) serves as cofactor. In terms of tissue distribution, expressed in spleen, testes, peripherical blood lymphocytes, heart, thymus, prostate and ovary.

It localises to the nucleus. It is found in the cytoplasm. The enzyme catalyses a 2'-deoxycytidine in single-stranded DNA + H2O + H(+) = a 2'-deoxyuridine in single-stranded DNA + NH4(+). With respect to regulation, (Microbial infection) Antiviral activity is neutralized by the HIV-1 virion infectivity factor (Vif), that prevents its incorporation into progeny HIV-1 virions by both inhibiting its translation and/or by inducing its ubiquitination and subsequent degradation by the 26S proteasome. In terms of biological role, DNA deaminase (cytidine deaminase) which acts as an inhibitor of retrovirus replication and retrotransposon mobility via deaminase-dependent and -independent mechanisms. After the penetration of retroviral nucleocapsids into target cells of infection and the initiation of reverse transcription, it can induce the conversion of cytosine to uracil in the minus-sense single-strand viral DNA, leading to G-to-A hypermutations in the subsequent plus-strand viral DNA. The resultant detrimental levels of mutations in the proviral genome, along with a deamination-independent mechanism that works prior to the proviral integration, together exert efficient antiretroviral effects in infected target cells. Selectively targets single-stranded DNA and does not deaminate double-stranded DNA or single- or double-stranded RNA. Exhibits antiviral activity against simian immunodeficiency virus (SIV), hepatitis B virus (HBV), herpes simplex virus 1 (HHV-1) and Epstein-Barr virus (EBV) and may inhibit the mobility of LTR and non-LTR retrotransposons. May also play a role in the epigenetic regulation of gene expression through the process of active DNA demethylation. The chain is DNA dC-&gt;dU-editing enzyme APOBEC-3C (APOBEC3C) from Homo sapiens (Human).